A 325-amino-acid chain; its full sequence is L-lactate dehydrogenase 1 (325 aa).

Residues Val-17, Asp-38, Lys-43, Tyr-68, and 82–83 each bind NAD(+); that span reads GA. Substrate-binding positions include Gln-85, Arg-91, and 123–126; that span reads NPVD. NAD(+)-binding positions include 121–123 and Ser-146; that span reads AAN. 151 to 154 contributes to the substrate binding site; it reads DTAR. Residues Arg-156 and His-171 each contribute to the beta-D-fructose 1,6-bisphosphate site. Catalysis depends on His-178, which acts as the Proton acceptor. Tyr-223 is subject to Phosphotyrosine. A substrate-binding site is contributed by Thr-232.

Belongs to the LDH/MDH superfamily. LDH family. In terms of assembly, homotetramer.

Its subcellular location is the cytoplasm. The catalysed reaction is (S)-lactate + NAD(+) = pyruvate + NADH + H(+). It functions in the pathway fermentation; pyruvate fermentation to lactate; (S)-lactate from pyruvate: step 1/1. Allosterically activated by fructose 1,6-bisphosphate (FBP). Functionally, catalyzes the conversion of lactate to pyruvate. In Lactococcus lactis subsp. cremoris (Streptococcus cremoris), this protein is L-lactate dehydrogenase 1.